The chain runs to 834 residues: DNA polymerase I, thermostable (834 aa).

Residues 176 to 262 enclose the 5'-3' exonuclease domain; sequence RPEQWVDFRA…DLPLEVDLAQ (87 aa). A polymerase region spans residues 412-834; it reads ERLHRNLLKR…MGEDWLSAKG (423 aa).

Belongs to the DNA polymerase type-A family.

It carries out the reaction DNA(n) + a 2'-deoxyribonucleoside 5'-triphosphate = DNA(n+1) + diphosphate. In terms of biological role, in addition to polymerase activity, this DNA polymerase exhibits 5'-3' exonuclease activity. The protein is DNA polymerase I, thermostable (polA) of Thermus thermophilus (strain ATCC 27634 / DSM 579 / HB8).